Consider the following 267-residue polypeptide: Indole-3-glycerol phosphate synthase (267 aa).

The protein belongs to the TrpC family.

The catalysed reaction is 1-(2-carboxyphenylamino)-1-deoxy-D-ribulose 5-phosphate + H(+) = (1S,2R)-1-C-(indol-3-yl)glycerol 3-phosphate + CO2 + H2O. It functions in the pathway amino-acid biosynthesis; L-tryptophan biosynthesis; L-tryptophan from chorismate: step 4/5. The chain is Indole-3-glycerol phosphate synthase from Polynucleobacter necessarius subsp. necessarius (strain STIR1).